The following is a 464-amino-acid chain: Protein FAM90A12 (464 aa).

Disordered regions lie at residues Met-1–Leu-42, Pro-70–Ala-389, and Ala-411–Pro-437. Basic and acidic residues-rich tracts occupy residues Gly-74–Ala-89 and Asn-97–Arg-114. Residues Leu-180–Leu-197 are compositionally biased toward low complexity.

The protein belongs to the FAM90 family.

The sequence is that of Protein FAM90A12 from Homo sapiens (Human).